Reading from the N-terminus, the 66-residue chain is Large ribosomal subunit protein uL29 (66 aa).

The protein belongs to the universal ribosomal protein uL29 family.

The sequence is that of Large ribosomal subunit protein uL29 from Allorhizobium ampelinum (strain ATCC BAA-846 / DSM 112012 / S4) (Agrobacterium vitis (strain S4)).